Consider the following 551-residue polypeptide: Eukaryotic translation initiation factor 3 subunit D-2 (551 aa).

A disordered region spans residues 108-152 (RTRGRTGRGTPNIASLGGSTAGGATASSTKYGKGRHTRNTQNVGR). The span at 115-136 (RGTPNIASLGGSTAGGATASST) shows a compositional bias: low complexity. Residues 290-304 (QFDLLTVNETSVEPP) are RNA gate. Residues 527-551 (PENAFDSDRDEEEESSEPLSNSNDN) are disordered.

The protein belongs to the eIF-3 subunit D family. In terms of assembly, component of the eukaryotic translation initiation factor 3 (eIF-3) complex. The eIF-3 complex interacts with pix.

The protein localises to the cytoplasm. Functionally, mRNA cap-binding component of the eukaryotic translation initiation factor 3 (eIF-3) complex, which is involved in protein synthesis of a specialized repertoire of mRNAs and, together with other initiation factors, stimulates binding of mRNA and methionyl-tRNAi to the 40S ribosome. The eIF-3 complex specifically targets and initiates translation of a subset of mRNAs involved in cell proliferation. In the eIF-3 complex, eif3d specifically recognizes and binds the 7-methylguanosine cap of a subset of mRNAs. The protein is Eukaryotic translation initiation factor 3 subunit D-2 of Drosophila simulans (Fruit fly).